The sequence spans 226 residues: UPF0758 protein Sca_1264 (226 aa).

The MPN domain occupies 102–224; it reads KITSPQDAAD…YLSMVEGGYF (123 aa). Zn(2+)-binding residues include histidine 173, histidine 175, and aspartate 186. The JAMM motif motif lies at 173-186; it reads HNHPSGDVTPSKED.

It belongs to the UPF0758 family.

This is UPF0758 protein Sca_1264 from Staphylococcus carnosus (strain TM300).